The sequence spans 310 residues: Iron ABC transporter substrate-binding lipoprotein MtsA (310 aa).

Residues 1 to 20 (MGKRMSLILGAFLSVFLLVA) form the signal peptide. A lipid anchor (N-palmitoyl cysteine) is attached at Cys21. Cys21 carries S-diacylglycerol cysteine lipidation. Fe(2+)-binding residues include His68, His140, Glu206, and Asp281.

This sequence belongs to the bacterial solute-binding protein 9 family. Lipoprotein receptor antigen (Lrai) subfamily.

It localises to the cell membrane. Functionally, part of the ATP-binding cassette (ABC) transport system MtsABC involved in iron import. Binds iron with high affinity and specificity and delivers it to the membrane permease for translocation into the cytoplasm. Has low affinity for Zn(2+) and Cu(2+). The chain is Iron ABC transporter substrate-binding lipoprotein MtsA (mtsA) from Streptococcus pyogenes serotype M1.